A 221-amino-acid polypeptide reads, in one-letter code: Protein LURP-one-related 17 (221 aa).

The interval 1 to 20 (MFPFLKQRSRSVHGEDAPSS) is disordered.

This sequence belongs to the LOR family.

In terms of biological role, might be related to the phospholipid scramblase and tubby-like superfamily of membrane tethered transcription factors. The protein is Protein LURP-one-related 17 of Arabidopsis thaliana (Mouse-ear cress).